Consider the following 219-residue polypeptide: Cytidylate kinase (219 aa).

Residue Gly11–Thr19 coordinates ATP.

The protein belongs to the cytidylate kinase family. Type 1 subfamily.

Its subcellular location is the cytoplasm. It catalyses the reaction CMP + ATP = CDP + ADP. The enzyme catalyses dCMP + ATP = dCDP + ADP. This Oleidesulfovibrio alaskensis (strain ATCC BAA-1058 / DSM 17464 / G20) (Desulfovibrio alaskensis) protein is Cytidylate kinase.